A 246-amino-acid chain; its full sequence is Probable fimbrial chaperone YadV (246 aa).

Positions 1–25 (MFFNTKHTTALCFVTCMAFSSSSIA) are cleaved as a signal peptide.

The protein belongs to the periplasmic pilus chaperone family.

The protein localises to the periplasm. Its function is as follows. Part of the yadCKLM-htrE-yadVN fimbrial operon. Could contribute to adhesion to various surfaces in specific environmental niches. The chain is Probable fimbrial chaperone YadV (yadV) from Escherichia coli (strain K12).